A 742-amino-acid chain; its full sequence is uncharacterized protein (742 aa).

Residues 167–471 (GIVPPEPWGH…AAGAAGGGGA (305 aa)) are disordered. Residues 205-218 (PAPPPSLFAPPPPS) are compositionally biased toward pro residues. Composition is skewed to polar residues over residues 318-331 (SPATSNEISSNAVS) and 358-368 (GSPQTLSTAPS). Positions 386-401 (TAGPAAPPTTGGPPAP) are enriched in pro residues. Low complexity predominate over residues 421–432 (PLSGGVPGGAVP). A compositionally biased stretch (pro residues) spans 433-447 (LGPPPTPPPAAPVTT). Residues 448–464 (PPLASGAPVAPTGAAAG) are compositionally biased toward low complexity.

Functionally, may be involved in the ESX-1 / type VII specialized secretion system (T7SS), which exports several proteins including EsxA and EsxB. Involved in DNA conjugation in the recipient strain. This is an uncharacterized protein from Mycolicibacterium smegmatis (strain MKD8) (Mycobacterium smegmatis).